The chain runs to 418 residues: STAM-binding protein-like A (418 aa).

The interval 199–218 (PDVHGPPQASLSPQTPPAGA) is disordered. Positions 251–382 (LFVPAELCQR…LTDYGMDDVG (132 aa)) constitute an MPN domain. Zn(2+)-binding residues include H329, H331, D342, H344, C384, H390, and H392. Residues 329–342 (HTHPTQTAFLSSVD) carry the JAMM motif motif.

The protein belongs to the peptidase M67C family. Zn(2+) is required as a cofactor.

Zinc metalloprotease that specifically cleaves 'Lys-63'-linked polyubiquitin chains. Does not cleave 'Lys-48'-linked polyubiquitin chains. Functions at the endosome and is able to oppose the ubiquitin-dependent sorting of receptors to lysosomes. This chain is STAM-binding protein-like A (stambpa), found in Danio rerio (Zebrafish).